The sequence spans 101 residues: Small ribosomal subunit protein uS14 (101 aa).

The protein belongs to the universal ribosomal protein uS14 family. Part of the 30S ribosomal subunit. Contacts proteins S3 and S10.

Functionally, binds 16S rRNA, required for the assembly of 30S particles and may also be responsible for determining the conformation of the 16S rRNA at the A site. This Stutzerimonas stutzeri (strain A1501) (Pseudomonas stutzeri) protein is Small ribosomal subunit protein uS14.